The primary structure comprises 252 residues: Outer kinetochore KNL1 complex subunit ZWINT (252 aa).

The interval 80–99 (QSPDALASEDASRQKATETK) is disordered. Positions 89-99 (DASRQKATETK) are enriched in basic and acidic residues. The stretch at 120-221 (LSEALPQVKE…QRNQSYLQLL (102 aa)) forms a coiled coil. A phosphoserine mark is found at serine 216 and serine 249.

Component of the KNL1 complex composed of KNL1 and ZWINT. Part of the ten-subunit outer kinetochore KMN network that includes the KNL1, MIS12 and NDC80 complexes; a bioriented kinetochore contains approximately 150 copies of the network. Interacts with the MIS12 complex subunits MIS12 DSN1, and PMF1. Interacts with the NDC80 complex subunit NDC80 during mitosis. Interacts with ZW10. Interacts with CETN3.

Its subcellular location is the nucleus. The protein resides in the chromosome. The protein localises to the centromere. It is found in the kinetochore. In terms of biological role, acts as a component of the outer kinetochore KNL1 complex that serves as a docking point for spindle assembly checkpoint components and mediates microtubule-kinetochore interactions. Kinetochores, consisting of a centromere-associated inner segment and a microtubule-contacting outer segment, play a crucial role in chromosome segregation by mediating the physical connection between centromeric DNA and spindle microtubules. The outer kinetochore is made up of the ten-subunit KMN network, comprising the MIS12, NDC80 and KNL1 complexes, and auxiliary microtubule-associated components; together they connect the outer kinetochore with the inner kinetochore, bind microtubules, and mediate interactions with mitotic checkpoint proteins that delay anaphase until chromosomes are bioriented on the spindle. Targets the RZZ complex to the kinetochore at prometaphase. Recruits MAD2L1 to the kinetochore, but is not required for BUB1B localization. In addition to orienting mitotic chromosomes, it is also essential for alignment of homologous chromosomes during meiotic metaphase I. In meiosis I, required to activate the spindle assembly checkpoint at unattached kinetochores to correct erroneous kinetochore-microtubule attachments. The protein is Outer kinetochore KNL1 complex subunit ZWINT (Zwint) of Mus musculus (Mouse).